A 186-amino-acid chain; its full sequence is Elongation factor P (186 aa).

The protein belongs to the elongation factor P family.

The protein localises to the cytoplasm. Its pathway is protein biosynthesis; polypeptide chain elongation. Its function is as follows. Involved in peptide bond synthesis. Stimulates efficient translation and peptide-bond synthesis on native or reconstituted 70S ribosomes in vitro. Probably functions indirectly by altering the affinity of the ribosome for aminoacyl-tRNA, thus increasing their reactivity as acceptors for peptidyl transferase. The polypeptide is Elongation factor P (Clostridium acetobutylicum (strain ATCC 824 / DSM 792 / JCM 1419 / IAM 19013 / LMG 5710 / NBRC 13948 / NRRL B-527 / VKM B-1787 / 2291 / W)).